A 283-amino-acid polypeptide reads, in one-letter code: Thymidylate synthase (283 aa).

Arg-21 is a dUMP binding site. Residue His-51 coordinates (6R)-5,10-methylene-5,6,7,8-tetrahydrofolate. 123–124 provides a ligand contact to dUMP; that stretch reads RR. The active-site Nucleophile is the Cys-156. DUMP contacts are provided by residues 185-188, Asn-196, and 226-228; these read RSAD and HIY. Asp-188 lines the (6R)-5,10-methylene-5,6,7,8-tetrahydrofolate pocket. Ala-282 contributes to the (6R)-5,10-methylene-5,6,7,8-tetrahydrofolate binding site.

The protein belongs to the thymidylate synthase family. Bacterial-type ThyA subfamily. As to quaternary structure, homodimer.

The protein resides in the cytoplasm. The catalysed reaction is dUMP + (6R)-5,10-methylene-5,6,7,8-tetrahydrofolate = 7,8-dihydrofolate + dTMP. The protein operates within pyrimidine metabolism; dTTP biosynthesis. Catalyzes the reductive methylation of 2'-deoxyuridine-5'-monophosphate (dUMP) to 2'-deoxythymidine-5'-monophosphate (dTMP) while utilizing 5,10-methylenetetrahydrofolate (mTHF) as the methyl donor and reductant in the reaction, yielding dihydrofolate (DHF) as a by-product. This enzymatic reaction provides an intracellular de novo source of dTMP, an essential precursor for DNA biosynthesis. The chain is Thymidylate synthase from Flavobacterium johnsoniae (strain ATCC 17061 / DSM 2064 / JCM 8514 / BCRC 14874 / CCUG 350202 / NBRC 14942 / NCIMB 11054 / UW101) (Cytophaga johnsonae).